Reading from the N-terminus, the 890-residue chain is MKPTQFGGSSSKMTEPIEYVTLISDDSDGEPTPKRNVNHPPSALSAPNPGQKQKHPDEDSNDAPATSDERRTSRRNRPKVDYSNRPSGSGDTASNDKSGSASMGPNNQQAERRSQSQTRKSEANATSSSVSGPSAGNSRPSQNGDSKDRDAGTPTVLSGQEGAVFQSRLPFNKMTPNEEACFPDISRSGILGHRVFLNIRNSLLHMWVDNPKIQLSFEIALKNLPPPFDSEPSLVRRVHSFLERHGFINFGIFKRLKPIPAKKLGKVIVIGAGISGLAVAHQLQQFGMDVIVLEARDRVGGRISTFRKNSYIADVGAMVVTGVYGNPMTILSKQIGMDLVPIQQTCPLYGPDGKPVPKEKDDVIEREFNRLLESASYLSHRLDFNYAGDCPVSLGDALEWIISMQEMQVMHKRGQHMQEIIATQTKIIEQRRRLKTLRDTIGKLKNEHLAMINQRKPKGTDGDLKYCYQEFNIRNTQIKMEETISTFHDLHAEEKQMLAKLHELEQNRPSDVYLSSRDRLILDWHFANLEFANATRLNNLSLKHWDQDDDFEFIGHHTTVRNGYSCVPVALTENLDIRVNSAVKEIKYGTKGVEVVAENLKTSNSQMTYKADLVVCTLTLGVLKVAVAHKESQQSNTVKFDPPLPDWKQQAIKRLGFGNLNKVVLCFDRIFWDPNANLFGHVGSTTASRGEMFLFWSISSSPVLLALVAGMAANLVESVTDDIIIGRCMSVLKNIFGNTSVPQPKETVVTRWRSDPWARGSYSYVSVGSSGSDYDLLAAPVIPPSSKDAEGLPRLFFAGEHTIRNYPATVHGAYLSGLREAGRIADYYLGYPEGTPPDIGYSVAEAANLVSVGNVVKLRDLSPNLSDSSPSSKKSEENSNSNTADSTELQ.

Residues 1-13 (MKPTQFGGSSSKM) show a composition bias toward polar residues. The segment at 1 to 164 (MKPTQFGGSS…TVLSGQEGAV (164 aa)) is disordered. Phosphoserine occurs at positions 24 and 27. The span at 84–109 (NRPSGSGDTASNDKSGSASMGPNNQQ) shows a compositional bias: polar residues. The span at 110–122 (AERRSQSQTRKSE) shows a compositional bias: basic and acidic residues. Residues 123-138 (ANATSSSVSGPSAGNS) are compositionally biased toward low complexity. In terms of domain architecture, SWIRM spans 160–259 (QEGAVFQSRL…FGIFKRLKPI (100 aa)). 267 to 295 (VIVIGAGISGLAVAHQLQQFGMDVIVLEA) contributes to the FAD binding site. The interval 860-890 (DLSPNLSDSSPSSKKSEENSNSNTADSTELQ) is disordered. A compositionally biased stretch (low complexity) spans 861 to 882 (LSPNLSDSSPSSKKSEENSNSN). At Ser-866 the chain carries Phosphoserine.

This sequence belongs to the flavin monoamine oxidase family. As to quaternary structure, component of a complex that contains at least HDAC1/Rpd3, CoRest and Su(var)3-3/Hdm. It depends on FAD as a cofactor.

It is found in the nucleus. It localises to the chromosome. Functionally, probable histone demethylase that specifically demethylates 'Lys-4' of histone H3, a specific tag for epigenetic transcriptional activation, thereby acting as a corepressor. Required for heterochromatic gene silencing. Acts by oxidizing the substrate by FAD to generate the corresponding imine that is subsequently hydrolyzed. Demethylates both mono- and tri-methylated 'Lys-4' of histone H3. May also demethylate 'Lys-9' of histone H3, Plays a role in the repression of neuronal genes. The protein is Possible lysine-specific histone demethylase 1 (Su(var)3-3) of Drosophila melanogaster (Fruit fly).